The chain runs to 285 residues: Putative hydrolase DDAH2 (285 aa).

The active-site Proton donor is the histidine 171. Residue cysteine 276 is the Nucleophile of the active site.

This sequence belongs to the DDAH family. Post-translationally, phosphorylated by TBK1. Phosphorylation inhibits the translocation into the mitochondrion upon Sendai viral infection. As to expression, detected in heart, placenta, lung, liver, skeletal muscle, kidney and pancreas, and at very low levels in brain.

The protein localises to the cytoplasm. The protein resides in the mitochondrion. Putative hydrolase with unknown substrate. Does not hydrolyze N(G),N(G)-dimethyl-L-arginine (ADMA) which acts as an inhibitor of NOS. In endothelial cells, induces expression of vascular endothelial growth factor (VEGF) via phosphorylation of the transcription factor SP1 by PKA in a process that is independent of NO and NO synthase. Similarly, enhances pancreatic insulin secretion through SP1-mediated transcriptional up-regulation of secretagogin/SCGN, an insulin vesicle docking protein. Upon viral infection, relocates to mitochondria where it promotes mitochondrial fission through activation of DNM1L leading to the inhibition of innate response activation mediated by MAVS. This chain is Putative hydrolase DDAH2, found in Homo sapiens (Human).